A 197-amino-acid polypeptide reads, in one-letter code: Imidazoleglycerol-phosphate dehydratase (197 aa).

This sequence belongs to the imidazoleglycerol-phosphate dehydratase family.

It localises to the cytoplasm. The enzyme catalyses D-erythro-1-(imidazol-4-yl)glycerol 3-phosphate = 3-(imidazol-4-yl)-2-oxopropyl phosphate + H2O. It functions in the pathway amino-acid biosynthesis; L-histidine biosynthesis; L-histidine from 5-phospho-alpha-D-ribose 1-diphosphate: step 6/9. The chain is Imidazoleglycerol-phosphate dehydratase from Methanocaldococcus jannaschii (strain ATCC 43067 / DSM 2661 / JAL-1 / JCM 10045 / NBRC 100440) (Methanococcus jannaschii).